The following is a 202-amino-acid chain: Ribonuclease HII (202 aa).

Residues 14–202 enclose the RNase H type-2 domain; sequence LPLAGVDEAG…VAQFSLFPAA (189 aa). A divalent metal cation-binding residues include Asp-20, Glu-21, and Asp-111.

Belongs to the RNase HII family. Mn(2+) is required as a cofactor. It depends on Mg(2+) as a cofactor.

The protein resides in the cytoplasm. It carries out the reaction Endonucleolytic cleavage to 5'-phosphomonoester.. Endonuclease that specifically degrades the RNA of RNA-DNA hybrids. In Rhizorhabdus wittichii (strain DSM 6014 / CCUG 31198 / JCM 15750 / NBRC 105917 / EY 4224 / RW1) (Sphingomonas wittichii), this protein is Ribonuclease HII.